The following is a 155-amino-acid chain: Small ribosomal subunit protein uS7cz/uS7cy (155 aa).

This sequence belongs to the universal ribosomal protein uS7 family. In terms of assembly, part of the 30S ribosomal subunit.

Its subcellular location is the plastid. The protein localises to the chloroplast. Its function is as follows. One of the primary rRNA binding proteins, it binds directly to 16S rRNA where it nucleates assembly of the head domain of the 30S subunit. This chain is Small ribosomal subunit protein uS7cz/uS7cy (rps7-A), found in Jasminum nudiflorum (Winter jasmine).